The primary structure comprises 238 residues: 2-C-methyl-D-erythritol 4-phosphate cytidylyltransferase (238 aa).

It belongs to the IspD/TarI cytidylyltransferase family. IspD subfamily.

It catalyses the reaction 2-C-methyl-D-erythritol 4-phosphate + CTP + H(+) = 4-CDP-2-C-methyl-D-erythritol + diphosphate. Its pathway is isoprenoid biosynthesis; isopentenyl diphosphate biosynthesis via DXP pathway; isopentenyl diphosphate from 1-deoxy-D-xylulose 5-phosphate: step 2/6. Catalyzes the formation of 4-diphosphocytidyl-2-C-methyl-D-erythritol from CTP and 2-C-methyl-D-erythritol 4-phosphate (MEP). The polypeptide is 2-C-methyl-D-erythritol 4-phosphate cytidylyltransferase (Paraburkholderia phytofirmans (strain DSM 17436 / LMG 22146 / PsJN) (Burkholderia phytofirmans)).